Consider the following 338-residue polypeptide: DNA-directed RNA polymerase subunit alpha (338 aa).

The alpha N-terminal domain (alpha-NTD) stretch occupies residues M1–E233. Positions I266–N338 are alpha C-terminal domain (alpha-CTD).

Belongs to the RNA polymerase alpha chain family. In terms of assembly, in plastids the minimal PEP RNA polymerase catalytic core is composed of four subunits: alpha, beta, beta', and beta''. When a (nuclear-encoded) sigma factor is associated with the core the holoenzyme is formed, which can initiate transcription.

It is found in the plastid. Its subcellular location is the chloroplast. It carries out the reaction RNA(n) + a ribonucleoside 5'-triphosphate = RNA(n+1) + diphosphate. DNA-dependent RNA polymerase catalyzes the transcription of DNA into RNA using the four ribonucleoside triphosphates as substrates. In Nandina domestica (Heavenly bamboo), this protein is DNA-directed RNA polymerase subunit alpha.